We begin with the raw amino-acid sequence, 166 residues long: Regulatory protein RecX (166 aa).

The protein belongs to the RecX family.

Its subcellular location is the cytoplasm. In terms of biological role, modulates RecA activity. This is Regulatory protein RecX from Escherichia coli (strain K12 / MC4100 / BW2952).